The sequence spans 80 residues: Exodeoxyribonuclease 7 small subunit (80 aa).

Belongs to the XseB family. As to quaternary structure, heterooligomer composed of large and small subunits.

It is found in the cytoplasm. It carries out the reaction Exonucleolytic cleavage in either 5'- to 3'- or 3'- to 5'-direction to yield nucleoside 5'-phosphates.. Its function is as follows. Bidirectionally degrades single-stranded DNA into large acid-insoluble oligonucleotides, which are then degraded further into small acid-soluble oligonucleotides. This Streptomyces avermitilis (strain ATCC 31267 / DSM 46492 / JCM 5070 / NBRC 14893 / NCIMB 12804 / NRRL 8165 / MA-4680) protein is Exodeoxyribonuclease 7 small subunit.